Consider the following 826-residue polypeptide: DEAD-box ATP-dependent RNA helicase 13 (826 aa).

Over residues 1–10 (MVTGDKESSL) the composition is skewed to basic and acidic residues. Disordered regions lie at residues 1 to 62 (MVTG…QLDG) and 76 to 175 (HLTL…GDDT). The segment covering 11 to 22 (MKKRNKRSHKRK) has biased composition (basic residues). The segment covering 49 to 58 (SFSTLFSGSG) has biased composition (polar residues). The span at 94–128 (EDDDDTNETVDEMIEGEEAEEDGEGRDDEDDEDDE) shows a compositional bias: acidic residues. The stretch at 125–166 (EDDEETRKKKEKKAKRNKEKKKEKKKKKQKKINEAAKNQDAS) forms a coiled coil. Residues 133-154 (KKEKKAKRNKEKKKEKKKKKQK) are compositionally biased toward basic residues. The Q motif signature appears at 190 to 218 (SAWSSMRLHPLLMKSIYRLDFKEPTKIQK). Residues 222 to 439 (NVAAYQGKDV…KLKRGSSKSK (218 aa)) enclose the Helicase ATP-binding domain. An ATP-binding site is contributed by 235–242 (AETGSGKT). The short motif at 363–366 (DEAD) is the DEAD box element. The region spanning 476-644 (KIEESFIKCE…YMPAVRKRLY (169 aa)) is the Helicase C-terminal domain. Coiled coils occupy residues 666-712 (LKKH…TLLS) and 783-810 (KMKG…IGRR). Positions 783–826 (KMKGQSAEKRRDIASLKKKRKEEKIGRRDQRRNQKKQRKLMASS) are disordered. 2 stretches are compositionally biased toward basic and acidic residues: residues 788–797 (SAEKRRDIAS) and 804–814 (EEKIGRRDQRR). The segment covering 815–826 (NQKKQRKLMASS) has biased composition (basic residues).

Belongs to the DEAD box helicase family. DDX24/MAK5 subfamily.

It catalyses the reaction ATP + H2O = ADP + phosphate + H(+). The protein is DEAD-box ATP-dependent RNA helicase 13 (RH13) of Arabidopsis thaliana (Mouse-ear cress).